Reading from the N-terminus, the 127-residue chain is UPF0325 protein VV1_1856 (127 aa).

This sequence belongs to the UPF0325 family.

This Vibrio vulnificus (strain CMCP6) protein is UPF0325 protein VV1_1856.